The sequence spans 288 residues: Diaminopimelate epimerase (288 aa).

2 residues coordinate substrate: Asn-14 and Asn-67. Cys-76 (proton donor) is an active-site residue. Residues 77-78 (GN), Asn-166, Asn-199, and 217-218 (ER) contribute to the substrate site. Catalysis depends on Cys-226, which acts as the Proton acceptor. 227 to 228 (GT) contributes to the substrate binding site.

The protein belongs to the diaminopimelate epimerase family. As to quaternary structure, homodimer.

It is found in the cytoplasm. The catalysed reaction is (2S,6S)-2,6-diaminopimelate = meso-2,6-diaminopimelate. The protein operates within amino-acid biosynthesis; L-lysine biosynthesis via DAP pathway; DL-2,6-diaminopimelate from LL-2,6-diaminopimelate: step 1/1. Catalyzes the stereoinversion of LL-2,6-diaminopimelate (L,L-DAP) to meso-diaminopimelate (meso-DAP), a precursor of L-lysine and an essential component of the bacterial peptidoglycan. The polypeptide is Diaminopimelate epimerase (Bacillus cereus (strain B4264)).